The chain runs to 300 residues: Arrestin domain-containing protein 4 (300 aa).

2 consecutive short sequence motifs (PPxY motif) follow at residues 231–234 (PPNY) and 276–279 (PPLY).

Belongs to the arrestin family. As to quaternary structure, interacts with ADRB2. Interacts (via PPxY motifs) with ITCH, NEDD4L and WWP2. Interacts with AVPR2. Identified in a complex containing at least ARRDC4, AVPR2 and HGS. Interacts with SLC11A2; controls the incorporation of SLC11A2 into extracellular vesicles through an ubiquitination-dependent mechanism. Interacts with TRIM65.

Its subcellular location is the early endosome. It is found in the cell membrane. The protein resides in the cytoplasmic vesicle. Functions as an adapter recruiting ubiquitin-protein ligases to their specific substrates. Plays a role in endocytosis of activated G protein-coupled receptors (GPCRs) Through an ubiquitination-dependent mechanism also plays a role in the incorporation of SLC11A2 into extracellular vesicles. May play a role in glucose uptake. Participates in innate immune response by promoting IFIH1/MDA5 activation through interaction with TRIM65. The sequence is that of Arrestin domain-containing protein 4 (Arrdc4) from Rattus norvegicus (Rat).